The following is a 345-amino-acid chain: Protein CHROMOSOME TRANSMISSION FIDELITY 7 (345 aa).

A CCHH-type zinc finger spans residues 96-120 (RHCAECGAKYAPGDELDEKNHQSFH).

This sequence belongs to the acetyltransferase family. ECO subfamily. In terms of processing, autoacetylated. Expressed in roots, stems, leaves, young seedlings and flower buds. Detected in the embryo, but not in the endosperm.

It is found in the nucleus. The protein resides in the cytoplasm. Acetyltransferase required for the establishment of sister chromatid cohesion. Involved in preservation of genome integrity and meiosis. Required for DNA repair and for the regulation of chromosome segregation during mitotic cell division. Knock-down mutants are extremely dwarf. Regulator of sister chromatid cohesion in meiosis which negatively regulates cohesin association with chromatin, acting as an antagonist of WAPL1 and WAPL2. This Arabidopsis thaliana (Mouse-ear cress) protein is Protein CHROMOSOME TRANSMISSION FIDELITY 7.